Reading from the N-terminus, the 416-residue chain is Gamma-glutamyl phosphate reductase (416 aa).

This sequence belongs to the gamma-glutamyl phosphate reductase family.

It is found in the cytoplasm. It carries out the reaction L-glutamate 5-semialdehyde + phosphate + NADP(+) = L-glutamyl 5-phosphate + NADPH + H(+). Its pathway is amino-acid biosynthesis; L-proline biosynthesis; L-glutamate 5-semialdehyde from L-glutamate: step 2/2. Its function is as follows. Catalyzes the NADPH-dependent reduction of L-glutamate 5-phosphate into L-glutamate 5-semialdehyde and phosphate. The product spontaneously undergoes cyclization to form 1-pyrroline-5-carboxylate. The protein is Gamma-glutamyl phosphate reductase of Streptococcus thermophilus.